The chain runs to 372 residues: UDP-N-acetylglucosamine--N-acetylmuramyl-(pentapeptide) pyrophosphoryl-undecaprenol N-acetylglucosamine transferase (372 aa).

UDP-N-acetyl-alpha-D-glucosamine contacts are provided by residues 16–18, Asn-128, Arg-164, Ser-192, Ile-250, and Gln-295; that span reads TGG.

The protein belongs to the glycosyltransferase 28 family. MurG subfamily.

It localises to the cell inner membrane. The enzyme catalyses di-trans,octa-cis-undecaprenyl diphospho-N-acetyl-alpha-D-muramoyl-L-alanyl-D-glutamyl-meso-2,6-diaminopimeloyl-D-alanyl-D-alanine + UDP-N-acetyl-alpha-D-glucosamine = di-trans,octa-cis-undecaprenyl diphospho-[N-acetyl-alpha-D-glucosaminyl-(1-&gt;4)]-N-acetyl-alpha-D-muramoyl-L-alanyl-D-glutamyl-meso-2,6-diaminopimeloyl-D-alanyl-D-alanine + UDP + H(+). It functions in the pathway cell wall biogenesis; peptidoglycan biosynthesis. Functionally, cell wall formation. Catalyzes the transfer of a GlcNAc subunit on undecaprenyl-pyrophosphoryl-MurNAc-pentapeptide (lipid intermediate I) to form undecaprenyl-pyrophosphoryl-MurNAc-(pentapeptide)GlcNAc (lipid intermediate II). This is UDP-N-acetylglucosamine--N-acetylmuramyl-(pentapeptide) pyrophosphoryl-undecaprenol N-acetylglucosamine transferase from Paraburkholderia xenovorans (strain LB400).